Consider the following 736-residue polypeptide: Epithelial splicing regulatory protein 2 (736 aa).

RRM domains lie at 224-301 (TVIR…KATG), 325-405 (MIIR…RSTA), and 659-736 (ALVR…ACCE).

The protein belongs to the ESRP family.

The protein resides in the nucleus. Functionally, mRNA splicing factor that regulates the formation of epithelial cell-specific isoforms. Specifically regulates the expression of FGFR2-IIIb, an epithelial cell-specific isoform of fgfr2. Acts by directly binding specific sequences in mRNAs. Binds the GU-rich sequence motifs in the ISE/ISS-3, a cis-element regulatory region present in the mRNA of fgfr2. The protein is Epithelial splicing regulatory protein 2 (esrp2) of Danio rerio (Zebrafish).